Reading from the N-terminus, the 262-residue chain is Putative cysteine-rich repeat secretory protein 24 (262 aa).

An N-terminal signal peptide occupies residues 1–29; that stretch reads MSLSSSVTKHLISASILAIVAMQLPSVHS. Gnk2-homologous domains lie at 39–141 and 147–259; these read YLHH…SIYT and YKNN…LYPF.

This sequence belongs to the cysteine-rich repeat secretory protein family.

It localises to the secreted. The sequence is that of Putative cysteine-rich repeat secretory protein 24 (CRRSP24) from Arabidopsis thaliana (Mouse-ear cress).